Consider the following 95-residue polypeptide: Large ribosomal subunit protein bL25 (95 aa).

This sequence belongs to the bacterial ribosomal protein bL25 family. Part of the 50S ribosomal subunit; part of the 5S rRNA/L5/L18/L25 subcomplex. Contacts the 5S rRNA. Binds to the 5S rRNA independently of L5 and L18.

Functionally, this is one of the proteins that binds to the 5S RNA in the ribosome where it forms part of the central protuberance. This Haemophilus influenzae (strain PittGG) protein is Large ribosomal subunit protein bL25.